Consider the following 93-residue polypeptide: Co-chaperonin GroES 2 (93 aa).

Residues 1–20 form a disordered region; that stretch reads MQPLGERIVVQREESETTTA.

This sequence belongs to the GroES chaperonin family. Heptamer of 7 subunits arranged in a ring. Interacts with the chaperonin GroEL.

It is found in the cytoplasm. In terms of biological role, together with the chaperonin GroEL, plays an essential role in assisting protein folding. The GroEL-GroES system forms a nano-cage that allows encapsulation of the non-native substrate proteins and provides a physical environment optimized to promote and accelerate protein folding. GroES binds to the apical surface of the GroEL ring, thereby capping the opening of the GroEL channel. The protein is Co-chaperonin GroES 2 of Rhodopirellula baltica (strain DSM 10527 / NCIMB 13988 / SH1).